A 361-amino-acid chain; its full sequence is Chorismate synthase (361 aa).

Residue R47 participates in NADP(+) binding. FMN is bound by residues 124-126 (RAS), G286, 301-305 (KPTAT), and R327.

The protein belongs to the chorismate synthase family. In terms of assembly, homotetramer. FMNH2 is required as a cofactor.

It carries out the reaction 5-O-(1-carboxyvinyl)-3-phosphoshikimate = chorismate + phosphate. It participates in metabolic intermediate biosynthesis; chorismate biosynthesis; chorismate from D-erythrose 4-phosphate and phosphoenolpyruvate: step 7/7. Its function is as follows. Catalyzes the anti-1,4-elimination of the C-3 phosphate and the C-6 proR hydrogen from 5-enolpyruvylshikimate-3-phosphate (EPSP) to yield chorismate, which is the branch point compound that serves as the starting substrate for the three terminal pathways of aromatic amino acid biosynthesis. This reaction introduces a second double bond into the aromatic ring system. This Akkermansia muciniphila (strain ATCC BAA-835 / DSM 22959 / JCM 33894 / BCRC 81048 / CCUG 64013 / CIP 107961 / Muc) protein is Chorismate synthase.